We begin with the raw amino-acid sequence, 334 residues long: Large ribosomal subunit protein uL3 (334 aa).

The segment covering 1 to 10 has biased composition (basic residues); that stretch reads MGMKKNRPRR. The tract at residues 1–21 is disordered; sequence MGMKKNRPRRGSLAFSPRKRA.

Belongs to the universal ribosomal protein uL3 family. Part of the 50S ribosomal subunit. Forms a cluster with proteins L14 and L24e.

Its function is as follows. One of the primary rRNA binding proteins, it binds directly near the 3'-end of the 23S rRNA, where it nucleates assembly of the 50S subunit. The polypeptide is Large ribosomal subunit protein uL3 (Methanococcus vannielii (strain ATCC 35089 / DSM 1224 / JCM 13029 / OCM 148 / SB)).